A 474-amino-acid polypeptide reads, in one-letter code: L-arabinose isomerase (474 aa).

Mn(2+) is bound by residues Glu306, Glu331, His348, and His447.

This sequence belongs to the arabinose isomerase family. Mn(2+) serves as cofactor.

It carries out the reaction beta-L-arabinopyranose = L-ribulose. It functions in the pathway carbohydrate degradation; L-arabinose degradation via L-ribulose; D-xylulose 5-phosphate from L-arabinose (bacterial route): step 1/3. Functionally, catalyzes the conversion of L-arabinose to L-ribulose. The chain is L-arabinose isomerase from Levilactobacillus brevis (strain ATCC 367 / BCRC 12310 / CIP 105137 / JCM 1170 / LMG 11437 / NCIMB 947 / NCTC 947) (Lactobacillus brevis).